The sequence spans 144 residues: Probable calcium-binding protein CML31 (144 aa).

4 EF-hand domains span residues 1-31, 32-67, 72-107, and 108-143; these read MAEI…FSPQ, ITSE…NGGG, EEEV…LGEK, and HTME…NKES. Ca(2+) contacts are provided by D45, D47, D49, Q51, E56, D85, D87, D89, K91, E96, D121, D123, D125, and E132.

Its function is as follows. Potential calcium sensor. This chain is Probable calcium-binding protein CML31 (CML31), found in Arabidopsis thaliana (Mouse-ear cress).